The primary structure comprises 216 residues: Cytochrome c biogenesis ATP-binding export protein CcmA (216 aa).

The ABC transporter domain maps to 5–216; sequence ISVDTLLSAS…RKIRLDYRFV (212 aa). 43-50 is an ATP binding site; sequence GPNGAGKT.

Belongs to the ABC transporter superfamily. CcmA exporter (TC 3.A.1.107) family. In terms of assembly, the complex is composed of two ATP-binding proteins (CcmA) and two transmembrane proteins (CcmB).

The protein localises to the cell inner membrane. The enzyme catalyses heme b(in) + ATP + H2O = heme b(out) + ADP + phosphate + H(+). In terms of biological role, part of the ABC transporter complex CcmAB involved in the biogenesis of c-type cytochromes; once thought to export heme, this seems not to be the case, but its exact role is uncertain. Responsible for energy coupling to the transport system. The sequence is that of Cytochrome c biogenesis ATP-binding export protein CcmA from Shewanella oneidensis (strain ATCC 700550 / JCM 31522 / CIP 106686 / LMG 19005 / NCIMB 14063 / MR-1).